A 371-amino-acid chain; its full sequence is Alanine dehydrogenase (371 aa).

The substrate site is built by R15 and K74. H95 acts as the Proton donor/acceptor in catalysis. NAD(+)-binding positions include S133, 177 to 178 (QA), D197, S219, 238 to 239 (VL), 266 to 269 (IAID), and 298 to 301 (VANM). Residue D269 is the Proton donor/acceptor of the active site.

This sequence belongs to the AlaDH/PNT family. As to quaternary structure, homohexamer. Trimer of dimer.

It carries out the reaction L-alanine + NAD(+) + H2O = pyruvate + NH4(+) + NADH + H(+). It functions in the pathway amino-acid degradation; L-alanine degradation via dehydrogenase pathway; NH(3) and pyruvate from L-alanine: step 1/1. Its function is as follows. Catalyzes the reversible reductive amination of pyruvate to L-alanine. May play a role in cell wall synthesis as L-alanine is an important constituent of the peptidoglycan layer. This is Alanine dehydrogenase (ald) from Staphylococcus epidermidis (strain ATCC 35984 / DSM 28319 / BCRC 17069 / CCUG 31568 / BM 3577 / RP62A).